We begin with the raw amino-acid sequence, 223 residues long: Urease accessory protein UreF (223 aa).

It belongs to the UreF family. UreD, UreF and UreG form a complex that acts as a GTP-hydrolysis-dependent molecular chaperone, activating the urease apoprotein by helping to assemble the nickel containing metallocenter of UreC. The UreE protein probably delivers the nickel.

It is found in the cytoplasm. Functionally, required for maturation of urease via the functional incorporation of the urease nickel metallocenter. The polypeptide is Urease accessory protein UreF (Pseudomonas paraeruginosa (strain DSM 24068 / PA7) (Pseudomonas aeruginosa (strain PA7))).